The primary structure comprises 189 residues: Elongation factor P (189 aa).

Lys34 carries the post-translational modification N6-(3,6-diaminohexanoyl)-5-hydroxylysine.

The protein belongs to the elongation factor P family. May be beta-lysylated on the epsilon-amino group of Lys-34 by the combined action of EpmA and EpmB, and then hydroxylated on the C5 position of the same residue by EpmC (if this protein is present). Lysylation is critical for the stimulatory effect of EF-P on peptide-bond formation. The lysylation moiety may extend toward the peptidyltransferase center and stabilize the terminal 3-CCA end of the tRNA. Hydroxylation of the C5 position on Lys-34 may allow additional potential stabilizing hydrogen-bond interactions with the P-tRNA.

The protein localises to the cytoplasm. It participates in protein biosynthesis; polypeptide chain elongation. Functionally, involved in peptide bond synthesis. Alleviates ribosome stalling that occurs when 3 or more consecutive Pro residues or the sequence PPG is present in a protein, possibly by augmenting the peptidyl transferase activity of the ribosome. Modification of Lys-34 is required for alleviation. The sequence is that of Elongation factor P from Dichelobacter nodosus (strain VCS1703A).